Reading from the N-terminus, the 392-residue chain is MYKRSLIAASLSVAALVSAQAMADINGGGATLPQQLYQEPGVLTAGFAAYIGVGSGNGKAAFLNNDYTKFVAGTTNKNVHWAGSDSKLSKTNETNPYLSAHGSAWGPLIQVPSVATSVALPFNKSGSNAVNFADVNTLCGVFSGRLTDWSQIPGSGRSGAITVVYRSESSGTTELFTRFLNASCSSTLEGGTFAITTSFGSSFSGGLPAGAVSAQGSQAVMNALNAAQGRITYMSPDFAAPTLAGLDDATKVAQVRGVSPAPANVSAAIGAVTPPTTAQRSDPNNWVPVFAATANPNDPSVRPYPTSGYPILGFTNLIFSQCYANATQTQQVRDFFTRHYGATANNDTAITNHRFVPLPASWKLAVRQSFLTSTNNLYIGHSNVCNGIGRPL.

The signal sequence occupies residues 1–23 (MYKRSLIAASLSVAALVSAQAMA).

This sequence belongs to the PstS family. Homodimer.

It is found in the secreted. It localises to the periplasm. The enzyme catalyses a phosphate monoester + H2O = an alcohol + phosphate. Its function is as follows. Has both a phosphomonoesterase and phosphodiesterase activity. The polypeptide is Alkaline phosphatase L (Pseudomonas aeruginosa (strain UCBPP-PA14)).